The primary structure comprises 146 residues: VHLTGEEKAAVTALWGKVNVDEVGGETLGRLLVVYPWTQRFFDSFGDLSSPDAVMSNPKVKAHGKKVLNSFSEGLKNLDNLKGTFAKLSELHCDKLHVDPENFKLLGNVLVCVLAHHFGKEFTPQVQAAYQKVVAGVANALAHKYH.

At Val1 the chain carries N-acetylvaline. The region spanning 2-146 (HLTGEEKAAV…VANALAHKYH (145 aa)) is the Globin domain. Residue Thr12 is modified to Phosphothreonine. Ser44 bears the Phosphoserine mark. The residue at position 59 (Lys59) is an N6-acetyllysine. His63 provides a ligand contact to heme b. The residue at position 82 (Lys82) is an N6-acetyllysine. Residue His92 participates in heme b binding. The residue at position 93 (Cys93) is an S-nitrosocysteine. The residue at position 144 (Lys144) is an N6-acetyllysine.

Belongs to the globin family. Heterotetramer of two alpha chains and two beta chains. Red blood cells.

Its function is as follows. Involved in oxygen transport from the lung to the various peripheral tissues. In Mustela putorius furo (European domestic ferret), this protein is Hemoglobin subunit beta (HBB).